The following is a 201-amino-acid chain: Holliday junction branch migration complex subunit RuvA (201 aa).

The interval 1-63 (MIAYLSGVVR…EDAQLLFGFP (63 aa)) is domain I. Residues 64–142 (DADHLKLFDL…EHLAAAASGA (79 aa)) are domain II. Residues 143 to 150 (AGGKRPAR) form a flexible linker region. The domain III stretch occupies residues 151-201 (VSSTAGHDAVDALLALGFREAQVRAAVAELLGADPEASADTLIRKALGRLR).

It belongs to the RuvA family. In terms of assembly, homotetramer. Forms an RuvA(8)-RuvB(12)-Holliday junction (HJ) complex. HJ DNA is sandwiched between 2 RuvA tetramers; dsDNA enters through RuvA and exits via RuvB. An RuvB hexamer assembles on each DNA strand where it exits the tetramer. Each RuvB hexamer is contacted by two RuvA subunits (via domain III) on 2 adjacent RuvB subunits; this complex drives branch migration. In the full resolvosome a probable DNA-RuvA(4)-RuvB(12)-RuvC(2) complex forms which resolves the HJ.

The protein resides in the cytoplasm. Its function is as follows. The RuvA-RuvB-RuvC complex processes Holliday junction (HJ) DNA during genetic recombination and DNA repair, while the RuvA-RuvB complex plays an important role in the rescue of blocked DNA replication forks via replication fork reversal (RFR). RuvA specifically binds to HJ cruciform DNA, conferring on it an open structure. The RuvB hexamer acts as an ATP-dependent pump, pulling dsDNA into and through the RuvAB complex. HJ branch migration allows RuvC to scan DNA until it finds its consensus sequence, where it cleaves and resolves the cruciform DNA. This Deinococcus radiodurans (strain ATCC 13939 / DSM 20539 / JCM 16871 / CCUG 27074 / LMG 4051 / NBRC 15346 / NCIMB 9279 / VKM B-1422 / R1) protein is Holliday junction branch migration complex subunit RuvA.